The following is a 763-amino-acid chain: Ethylene receptor 2 (763 aa).

Transmembrane regions (helical) follow at residues 58–78 (FLIA…ATCS), 86–106 (IVLQ…ITMF), and 115–135 (VVLA…ATAI). Cu cation is bound by residues cysteine 97 and histidine 101. In terms of domain architecture, GAF spans 190 to 339 (DRHTILYTTM…VVADQVAVAL (150 aa)). Positions 382-615 (AMYDGMRRPM…TIMLALQFQL (234 aa)) constitute a Histidine kinase domain. In terms of domain architecture, Response regulatory spans 641–760 (QVILVDSDDT…ALGDELYRVL (120 aa)). 4-aspartylphosphate is present on aspartate 692.

Belongs to the ethylene receptor family. Cu cation is required as a cofactor. As to expression, expressed in anthers and hulls.

It is found in the endoplasmic reticulum membrane. It carries out the reaction ATP + protein L-histidine = ADP + protein N-phospho-L-histidine.. Functionally, ethylene receptor related to bacterial two-component regulators. Acts as a negative regulator of ethylene signaling. May delay the transition from the vegetative stage to the floral stage by up-regulating GI (GIGANTEA) and RCN1 and cause starch accumulation in stems by down-regulating the alpha-amylase AMY3D. This Oryza sativa subsp. indica (Rice) protein is Ethylene receptor 2.